We begin with the raw amino-acid sequence, 791 residues long: Phosphoenolpyruvate synthase (791 aa).

Residue Thr-416 is modified to Phosphothreonine. Residue His-418 is the Tele-phosphohistidine intermediate of the active site. Substrate is bound by residues Arg-508, Arg-575, Glu-677, Gly-698, Ser-699, Asn-700, and Asp-701. Residue Glu-677 participates in Mg(2+) binding. Residue Asp-701 participates in Mg(2+) binding. Tyr-744 bears the Phosphotyrosine mark. Catalysis depends on Cys-748, which acts as the Proton donor.

It belongs to the PEP-utilizing enzyme family. It depends on Mg(2+) as a cofactor.

The enzyme catalyses pyruvate + ATP + H2O = phosphoenolpyruvate + AMP + phosphate + 2 H(+). It participates in carbohydrate biosynthesis; gluconeogenesis. In terms of biological role, catalyzes the phosphorylation of pyruvate to phosphoenolpyruvate. The sequence is that of Phosphoenolpyruvate synthase (ppsA) from Pseudomonas aeruginosa (strain UCBPP-PA14).